Reading from the N-terminus, the 122-residue chain is Large ribosomal subunit protein bL12 (122 aa).

This sequence belongs to the bacterial ribosomal protein bL12 family. Homodimer. Part of the ribosomal stalk of the 50S ribosomal subunit. Forms a multimeric L10(L12)X complex, where L10 forms an elongated spine to which 2 to 4 L12 dimers bind in a sequential fashion. Binds GTP-bound translation factors.

Functionally, forms part of the ribosomal stalk which helps the ribosome interact with GTP-bound translation factors. Is thus essential for accurate translation. In Pseudomonas aeruginosa (strain LESB58), this protein is Large ribosomal subunit protein bL12.